The following is a 135-amino-acid chain: Interleukin-4 (135 aa).

The first 24 residues, 1–24 (MGLTSQLIPVLVCLLACTSHFVHG), serve as a signal peptide directing secretion. 3 cysteine pairs are disulfide-bonded: Cys27–Cys135, Cys48–Cys85, and Cys70–Cys105. Residues Asn62 and Asn96 are each glycosylated (N-linked (GlcNAc...) asparagine).

It belongs to the IL-4/IL-13 family.

It localises to the secreted. Its function is as follows. Participates in at least several B-cell activation processes as well as of other cell types. It is a costimulator of DNA-synthesis. It induces the expression of class II MHC molecules on resting B-cells. It enhances both secretion and cell surface expression of IgE and IgG1. It also regulates the expression of the low affinity Fc receptor for IgE (CD23) on both lymphocytes and monocytes. Positively regulates IL31RA expression in macrophages. Stimulates autophagy in dendritic cells by interfering with mTORC1 signaling and through the induction of RUFY4. The sequence is that of Interleukin-4 (IL4) from Cervus elaphus (Red deer).